The primary structure comprises 268 residues: Mesoderm posterior protein 1 (268 aa).

Positions 17–93 are disordered; the sequence is AAWGPTRRPP…RQSASEREKL (77 aa). Residues 36–48 show a composition bias toward polar residues; it reads LVSSPDSWGSTPA. The span at 66-86 shows a compositional bias: low complexity; the sequence is APSVGRRGARSSRLGSGQRQS. Positions 82 to 136 constitute a bHLH domain; it reads GQRQSASEREKLRMRTLARALHELRRFLPPSVAPAGQSLTKIETLRLAIRYIGHL. The CPLCP motif lies at 163 to 167; sequence CPLCP. 2 repeat units span residues 182–183 and 184–185. The interval 182–185 is 2 X 2 AA tandem repeats of G-Q; that stretch reads GQGQ.

The protein resides in the nucleus. Functionally, transcription factor. Plays a role in the epithelialization of somitic mesoderm and in the development of cardiac mesoderm. Defines the rostrocaudal patterning of the somites by participating in distinct Notch pathways. The chain is Mesoderm posterior protein 1 (MESP1) from Homo sapiens (Human).